Reading from the N-terminus, the 124-residue chain is Small ribosomal subunit protein uS12 (124 aa).

Asp89 bears the 3-methylthioaspartic acid mark. The tract at residues 105–124 is disordered; the sequence is QGVKNRKQARSRYGAKKEKS. Over residues 108–118 the composition is skewed to basic residues; sequence KNRKQARSRYG.

This sequence belongs to the universal ribosomal protein uS12 family. In terms of assembly, part of the 30S ribosomal subunit. Contacts proteins S8 and S17. May interact with IF1 in the 30S initiation complex.

In terms of biological role, with S4 and S5 plays an important role in translational accuracy. Its function is as follows. Interacts with and stabilizes bases of the 16S rRNA that are involved in tRNA selection in the A site and with the mRNA backbone. Located at the interface of the 30S and 50S subunits, it traverses the body of the 30S subunit contacting proteins on the other side and probably holding the rRNA structure together. The combined cluster of proteins S8, S12 and S17 appears to hold together the shoulder and platform of the 30S subunit. This is Small ribosomal subunit protein uS12 from Mycobacterium sp. (strain JLS).